Reading from the N-terminus, the 421-residue chain is Enolase (421 aa).

A (2R)-2-phosphoglycerate-binding site is contributed by Gln-165. Catalysis depends on Glu-207, which acts as the Proton donor. Positions 244, 285, and 312 each coordinate Mg(2+). (2R)-2-phosphoglycerate contacts are provided by Lys-337, Arg-366, Ser-367, and Lys-388. The active-site Proton acceptor is Lys-337.

This sequence belongs to the enolase family. The cofactor is Mg(2+).

The protein localises to the cytoplasm. Its subcellular location is the secreted. It localises to the cell surface. It carries out the reaction (2R)-2-phosphoglycerate = phosphoenolpyruvate + H2O. The protein operates within carbohydrate degradation; glycolysis; pyruvate from D-glyceraldehyde 3-phosphate: step 4/5. Functionally, catalyzes the reversible conversion of 2-phosphoglycerate (2-PG) into phosphoenolpyruvate (PEP). It is essential for the degradation of carbohydrates via glycolysis. This chain is Enolase, found in Ehrlichia chaffeensis (strain ATCC CRL-10679 / Arkansas).